A 371-amino-acid polypeptide reads, in one-letter code: uncharacterized protein (371 aa).

33–40 (GPLNSGKT) provides a ligand contact to ATP.

This sequence belongs to the archaeal ATPase family.

This is an uncharacterized protein from Methanocaldococcus jannaschii (strain ATCC 43067 / DSM 2661 / JAL-1 / JCM 10045 / NBRC 100440) (Methanococcus jannaschii).